The following is a 201-amino-acid chain: Ras-related protein Rab-9A (201 aa).

A2 bears the N-acetylalanine mark. Residues G17, V18, G19, K20, S21, S22, D33, S34, H38, and T39 each contribute to the GTP site. Mg(2+) is bound at residue S21. Positions 31–42 (KFDSQLFHTIGV) match the Switch 1 motif. S34 is subject to Phosphoserine. Mg(2+)-binding residues include T39 and D62. The Switch 2 motif lies at 64–78 (AGQERFRSLRTPFYR). GTP is bound by residues G65, N124, K125, D127, A155, and K156. S179 carries the post-translational modification Phosphoserine. A Phosphothreonine modification is found at T187. S-geranylgeranyl cysteine attachment occurs at residues C200 and C201.

Belongs to the small GTPase superfamily. Rab family. As to quaternary structure, interacts (preferentially in its GTP-bound form) with GCC2 (via its GRIP domain). Interacts (GTP-bound form) with SGSM1; the GDP-bound form has much lower affinity for SGSM1. Interacts with SGSM2. The GTP-bound form but not the GDP-bound form interacts with HPS4. The GTP-bound form but not the GDP-bound form interacts with BLOC-3 complex (heterodimer of HPS1 and HPS4) but does not interact with HPS1 alone. Interacts (GTP-bound form) with NDE1; two RAB9A-GTP molecules lie on the opposite sides of the NDE1 homodimer; the interaction leads to RAB9A-dynein motor tethering. Interacts (GTP-bound form) with NDEL1. Mg(2+) serves as cofactor.

Its subcellular location is the cell membrane. It localises to the endoplasmic reticulum membrane. The protein localises to the golgi apparatus membrane. It is found in the late endosome. The protein resides in the cytoplasmic vesicle. Its subcellular location is the phagosome membrane. It localises to the phagosome. The protein localises to the cytoplasmic vesicle membrane. It is found in the melanosome. The enzyme catalyses GTP + H2O = GDP + phosphate + H(+). Its activity is regulated as follows. Regulated by guanine nucleotide exchange factors (GEFs) which promote the exchange of bound GDP for free GTP. Regulated by GTPase activating proteins (GAPs) which increase the GTP hydrolysis activity. Inhibited by GDP dissociation inhibitors (GDIs). In terms of biological role, the small GTPases Rab are key regulators of intracellular membrane trafficking, from the formation of transport vesicles to their fusion with membranes. Rabs cycle between an inactive GDP-bound form and an active GTP-bound form that is able to recruit to membranes different sets of downstream effectors directly responsible for vesicle formation, movement, tethering and fusion. RAB9A is involved in the transport of proteins between the endosomes and the trans-Golgi network (TGN). Specifically uses NDE1/NDEL1 as an effector to interact with the dynein motor complex in order to control retrograde trafficking of RAB9-associated late endosomes to the TGN. Involved in the recruitment of SGSM2 to melanosomes and is required for the proper trafficking of melanogenic enzymes TYR, TYRP1 and DCT/TYRP2 to melanosomes in melanocytes. This chain is Ras-related protein Rab-9A, found in Mus musculus (Mouse).